We begin with the raw amino-acid sequence, 426 residues long: Putative glutamate--cysteine ligase 2 (426 aa).

It belongs to the glutamate--cysteine ligase type 2 family. YbdK subfamily.

It catalyses the reaction L-cysteine + L-glutamate + ATP = gamma-L-glutamyl-L-cysteine + ADP + phosphate + H(+). Functionally, ATP-dependent carboxylate-amine ligase which exhibits weak glutamate--cysteine ligase activity. In Bradyrhizobium diazoefficiens (strain JCM 10833 / BCRC 13528 / IAM 13628 / NBRC 14792 / USDA 110), this protein is Putative glutamate--cysteine ligase 2.